A 359-amino-acid chain; its full sequence is Phospho-N-acetylmuramoyl-pentapeptide-transferase (359 aa).

A run of 10 helical transmembrane segments spans residues 21–41 (YITF…FLLG), 73–93 (TMGG…WADL), 98–118 (IWVT…DDYL), 143–163 (GICL…VPFF), 166–186 (VAPD…VGTS), 202–222 (PLVI…NAII), 237–257 (VTVF…FNAY), 261–281 (IFMG…VAII), 286–306 (ILLT…IFQV), and 336–356 (KIIV…VSTL).

This sequence belongs to the glycosyltransferase 4 family. MraY subfamily. The cofactor is Mg(2+).

Its subcellular location is the cell inner membrane. It catalyses the reaction UDP-N-acetyl-alpha-D-muramoyl-L-alanyl-gamma-D-glutamyl-meso-2,6-diaminopimeloyl-D-alanyl-D-alanine + di-trans,octa-cis-undecaprenyl phosphate = di-trans,octa-cis-undecaprenyl diphospho-N-acetyl-alpha-D-muramoyl-L-alanyl-D-glutamyl-meso-2,6-diaminopimeloyl-D-alanyl-D-alanine + UMP. It participates in cell wall biogenesis; peptidoglycan biosynthesis. Functionally, catalyzes the initial step of the lipid cycle reactions in the biosynthesis of the cell wall peptidoglycan: transfers peptidoglycan precursor phospho-MurNAc-pentapeptide from UDP-MurNAc-pentapeptide onto the lipid carrier undecaprenyl phosphate, yielding undecaprenyl-pyrophosphoryl-MurNAc-pentapeptide, known as lipid I. The polypeptide is Phospho-N-acetylmuramoyl-pentapeptide-transferase (Desulfosudis oleivorans (strain DSM 6200 / JCM 39069 / Hxd3) (Desulfococcus oleovorans)).